Here is a 625-residue protein sequence, read N- to C-terminus: Endoglucanase 13 (625 aa).

A signal peptide spans 1-34 (MAATMNKTPATTFLLIPAAASLVLLLAAAASVEA). The Nucleophile role is filled by Asp91. The active site involves His427. N-linked (GlcNAc...) asparagine glycosylation occurs at Asn440. Residues Asp479 and Glu488 contribute to the active site. Residues 509–530 (ADNTPEYTPAPNAPSPSNGGSP) form a disordered region.

This sequence belongs to the glycosyl hydrolase 9 (cellulase E) family. In terms of tissue distribution, expressed in roots and flowers.

Its subcellular location is the secreted. The catalysed reaction is Endohydrolysis of (1-&gt;4)-beta-D-glucosidic linkages in cellulose, lichenin and cereal beta-D-glucans.. The polypeptide is Endoglucanase 13 (GLU6) (Oryza sativa subsp. japonica (Rice)).